The primary structure comprises 369 residues: uncharacterized protein (369 aa).

Residues Met-1–Ala-19 form the signal peptide.

This is an uncharacterized protein from Haemophilus influenzae (strain ATCC 51907 / DSM 11121 / KW20 / Rd).